The chain runs to 205 residues: Thiamine-phosphate synthase (205 aa).

Residues 37-41 (QVREK) and asparagine 69 contribute to the 4-amino-2-methyl-5-(diphosphooxymethyl)pyrimidine site. 2 residues coordinate Mg(2+): aspartate 70 and aspartate 89. A 4-amino-2-methyl-5-(diphosphooxymethyl)pyrimidine-binding site is contributed by serine 108. 134–136 (TGS) lines the 2-[(2R,5Z)-2-carboxy-4-methylthiazol-5(2H)-ylidene]ethyl phosphate pocket. Residue lysine 137 coordinates 4-amino-2-methyl-5-(diphosphooxymethyl)pyrimidine. Residues glycine 165 and 185–186 (IS) each bind 2-[(2R,5Z)-2-carboxy-4-methylthiazol-5(2H)-ylidene]ethyl phosphate.

This sequence belongs to the thiamine-phosphate synthase family. The cofactor is Mg(2+).

The enzyme catalyses 2-[(2R,5Z)-2-carboxy-4-methylthiazol-5(2H)-ylidene]ethyl phosphate + 4-amino-2-methyl-5-(diphosphooxymethyl)pyrimidine + 2 H(+) = thiamine phosphate + CO2 + diphosphate. The catalysed reaction is 2-(2-carboxy-4-methylthiazol-5-yl)ethyl phosphate + 4-amino-2-methyl-5-(diphosphooxymethyl)pyrimidine + 2 H(+) = thiamine phosphate + CO2 + diphosphate. It carries out the reaction 4-methyl-5-(2-phosphooxyethyl)-thiazole + 4-amino-2-methyl-5-(diphosphooxymethyl)pyrimidine + H(+) = thiamine phosphate + diphosphate. Its pathway is cofactor biosynthesis; thiamine diphosphate biosynthesis; thiamine phosphate from 4-amino-2-methyl-5-diphosphomethylpyrimidine and 4-methyl-5-(2-phosphoethyl)-thiazole: step 1/1. Functionally, condenses 4-methyl-5-(beta-hydroxyethyl)thiazole monophosphate (THZ-P) and 2-methyl-4-amino-5-hydroxymethyl pyrimidine pyrophosphate (HMP-PP) to form thiamine monophosphate (TMP). The polypeptide is Thiamine-phosphate synthase (Clostridium botulinum (strain Kyoto / Type A2)).